Reading from the N-terminus, the 631-residue chain is 1-deoxy-D-xylulose-5-phosphate synthase (631 aa).

Thiamine diphosphate is bound by residues His-72 and 113–115 (GHA). Position 144 (Asp-144) interacts with Mg(2+). Residues 145–146 (GA), Asn-174, Tyr-287, and Glu-370 each bind thiamine diphosphate. Asn-174 contributes to the Mg(2+) binding site.

It belongs to the transketolase family. DXPS subfamily. In terms of assembly, homodimer. It depends on Mg(2+) as a cofactor. Thiamine diphosphate serves as cofactor.

The enzyme catalyses D-glyceraldehyde 3-phosphate + pyruvate + H(+) = 1-deoxy-D-xylulose 5-phosphate + CO2. The protein operates within metabolic intermediate biosynthesis; 1-deoxy-D-xylulose 5-phosphate biosynthesis; 1-deoxy-D-xylulose 5-phosphate from D-glyceraldehyde 3-phosphate and pyruvate: step 1/1. In terms of biological role, catalyzes the acyloin condensation reaction between C atoms 2 and 3 of pyruvate and glyceraldehyde 3-phosphate to yield 1-deoxy-D-xylulose-5-phosphate (DXP). This is 1-deoxy-D-xylulose-5-phosphate synthase from Prochlorococcus marinus (strain MIT 9515).